Reading from the N-terminus, the 300-residue chain is F-box protein PP2-A15 (300 aa).

The 47-residue stretch at 17–63 (MGPGLGDIPESCVACVFMYLTPPEICNLAGLNRSFRGAASSDSVWEK) folds into the F-box domain.

This Arabidopsis thaliana (Mouse-ear cress) protein is F-box protein PP2-A15 (PP2A15).